The chain runs to 222 residues: Protein-L-isoaspartate O-methyltransferase (222 aa).

Residue Ser-68 is part of the active site.

It belongs to the methyltransferase superfamily. L-isoaspartyl/D-aspartyl protein methyltransferase family.

Its subcellular location is the cytoplasm. It carries out the reaction [protein]-L-isoaspartate + S-adenosyl-L-methionine = [protein]-L-isoaspartate alpha-methyl ester + S-adenosyl-L-homocysteine. Its function is as follows. Catalyzes the methyl esterification of L-isoaspartyl residues in peptides and proteins that result from spontaneous decomposition of normal L-aspartyl and L-asparaginyl residues. It plays a role in the repair and/or degradation of damaged proteins. The chain is Protein-L-isoaspartate O-methyltransferase from Koribacter versatilis (strain Ellin345).